A 217-amino-acid polypeptide reads, in one-letter code: Non-structural protein NS3 (217 aa).

The protein belongs to the orbivirus NS3 family.

Its function is as follows. May play a role in the release of virions from infected cells. In African horse sickness virus 9 (AHSV-9), this protein is Non-structural protein NS3 (Segment-10).